We begin with the raw amino-acid sequence, 679 residues long: MPLHPPARRPHGHRRNGSEAQTEATTQDTGRLSCPRRVGAAVCPIQGLGHRAARRPRRGVGTTSASRAPRPGALMPATRNRPRFIHYRVQPPRTHVSFKRPKRSRTHQSHTKVPGWTHEKRMGSSVEEGLRPELSQLEQDADNLGEEEAARLPVTSLNGLLMEGDRHPNPGQGPFFYIGGTNGASIISNYCESKGWQRTQDSRCEDYKLKWCEIKCRDNYCSFREGQQLLFQLPNNKLLTTKIGLLSALREHARTLSKARLMPSTQAKVLKMDEFFPETYRLDIRDERQAFFTLFDETQMWICKPTASNQGKGIFLIRSQEEAAALQAKTQSIEDDPIYRKMPFRAPQARVVQRYVQNPLLLDGKKFDVRSYMLIACAMPYMVFFGHGYARLTLSLYNPHSSDLSGHLTNQFMQKKSPLYMLLKDSTVWSMEHLNRYINDKFRKSKGLPRDWVFTTFTKRMQQIMSHCFLAVKSKLECKLGYFDLIGCDFLIDENFKVWLLEMNSNPALHTNCEVLKEVIPGVVMETLDLALETCQKSLHSQKMLPLQSQRRFVLLYNGETTDLWPRLGSSRPPIRLPYANSNHARSTCEISSSSLTSTRVTIADRPAARKSMSSRTAPICASRKSRLSDSGGVSIEESETSVCSGLPEGSRDAAREPSLGPTEEEREEEQRSTSHRGS.

Positions 1–15 (MPLHPPARRPHGHRR) are enriched in basic residues. 3 disordered regions span residues 1–33 (MPLH…GRLS), 49–77 (GHRA…LMPA), and 96–124 (VSFK…RMGS). Residues 18 to 30 (SEAQTEATTQDTG) are compositionally biased toward polar residues. Positions 96–110 (VSFKRPKRSRTHQSH) are enriched in basic residues. Residues 172–543 (QGPFFYIGGT…TCQKSLHSQK (372 aa)) form the TTL domain. Residues lysine 304, 310 to 311 (QG), 353 to 356 (QRYV), 366 to 368 (KFD), and 409 to 410 (TN) contribute to the ATP site. Glutamine 310 is an a protein binding site. Residues aspartate 489, glutamate 502, and asparagine 504 each contribute to the Mg(2+) site. The segment at 605-679 (DRPAARKSMS…EQRSTSHRGS (75 aa)) is disordered.

The cofactor is Mg(2+).

It localises to the cytoplasm. The protein resides in the cytoskeleton. It is found in the cell projection. Its subcellular location is the cilium. The protein localises to the cilium axoneme. It carries out the reaction (glycyl)(n)-glycyl-L-glutamyl-[protein] + glycine + ATP = (glycyl)(n+1)-glycyl-L-glutamyl-[protein] + ADP + phosphate + H(+). Polyglycylase which modifies both tubulin and non-tubulin proteins, generating polyglycine side chains of variable lengths on the gamma-carboxyl groups of specific glutamate residues of target proteins. Involved in the elongation step rather than the initiation step of the polyglycylation reaction. Polyglycylates alpha-tubulin and beta-tubulin. Polyglycylates non-tubulin proteins such as nucleosome assembly protein NAP1. The protein is Protein polyglycylase TTLL10 of Rattus norvegicus (Rat).